The sequence spans 117 residues: Zinc metalloproteinase/disintegrin (117 aa).

The Disintegrin domain maps to Thr36–Ala117. 6 cysteine pairs are disulfide-bonded: Cys50–Cys65, Cys52–Cys60, Cys59–Cys82, Cys73–Cys79, Cys78–Cys103, and Cys91–Cys110. A Cell attachment site motif is present at residues Arg95–Asp97.

It belongs to the venom metalloproteinase (M12B) family. P-II subfamily. P-IIa sub-subfamily. Monomer. The cofactor is Zn(2+). As to expression, expressed by the venom gland.

It localises to the secreted. Impairs hemostasis in the envenomed animal. Its function is as follows. Inhibits platelet aggregation and bone resorption. This Gloydius halys (Chinese water mocassin) protein is Zinc metalloproteinase/disintegrin.